A 459-amino-acid polypeptide reads, in one-letter code: ATP-dependent protease ATPase subunit HslU (459 aa).

Residues Val-18, 60–65, Asp-272, Glu-337, and Arg-409 each bind ATP; that span reads GVGKTE.

The protein belongs to the ClpX chaperone family. HslU subfamily. A double ring-shaped homohexamer of HslV is capped on each side by a ring-shaped HslU homohexamer. The assembly of the HslU/HslV complex is dependent on binding of ATP.

It localises to the cytoplasm. Functionally, ATPase subunit of a proteasome-like degradation complex; this subunit has chaperone activity. The binding of ATP and its subsequent hydrolysis by HslU are essential for unfolding of protein substrates subsequently hydrolyzed by HslV. HslU recognizes the N-terminal part of its protein substrates and unfolds these before they are guided to HslV for hydrolysis. The polypeptide is ATP-dependent protease ATPase subunit HslU (Thermoanaerobacter pseudethanolicus (strain ATCC 33223 / 39E) (Clostridium thermohydrosulfuricum)).